A 281-amino-acid polypeptide reads, in one-letter code: Proline iminopeptidase PfmaB (281 aa).

The AB hydrolase-1 domain occupies 23–267 (PLVITLHGGR…NANHSVHVEK (245 aa)).

The protein belongs to the peptidase S33 family.

It catalyses the reaction Release of N-terminal proline from a peptide.. Proline iminopeptidase; part of the gene cluster that mediates the biosynthesis of dihydroxynaphthalene (DHN)-melanin, a bluish-green pigment forming a dark layer in the conidial wall that protects the conidia from UV radiations. The first step of the pathway is the production of the pentaketide 1,3,6,8-tetrahydroxynaphthalene (1,3,6,8-THN or T4HN) by the polyketide synthase PfmaE though condensation of acetyl-CoA with malonyl-CoA. T4HN is not stable and easily oxidizes into the stable form flaviolin. T4HN is also substrate of the hydroxynaphthalene reductase PfmaG to yield scytalone. The scytalone dehydratase PfmaJ then reduces scytalone to 1,3,8-THN. 1,3,8-THN is then substrate of the hydroxynaphthalene reductase PfmaI to yield vermelone. Vermelone is further converted by the multicopper oxidase PfmaD to 1,8-DHN. Finally the laccase PFICI_06862 transforms 1,8-DHN to DHN-melanin. The roles of the 5-oxoprolinase PfmaA and the proline iminopeptidase PfmaB within the cluster have not been elucidated yet. The protein is Proline iminopeptidase PfmaB of Pestalotiopsis fici (strain W106-1 / CGMCC3.15140).